The sequence spans 394 residues: Ribulose bisphosphate carboxylase large chain (394 aa).

K5 is modified (N6,N6,N6-trimethyllysine). N114 and T164 together coordinate substrate. The active-site Proton acceptor is K166. Substrate is bound at residue K168. Mg(2+) contacts are provided by K192, D194, and E195. An N6-carboxylysine modification is found at K192. Residue H285 is the Proton acceptor of the active site. Substrate is bound by residues R286, H318, and S370.

Belongs to the RuBisCO large chain family. Type I subfamily. Heterohexadecamer of 8 large chains and 8 small chains; disulfide-linked. The disulfide link is formed within the large subunit homodimers. It depends on Mg(2+) as a cofactor. In terms of processing, the disulfide bond which can form in the large chain dimeric partners within the hexadecamer appears to be associated with oxidative stress and protein turnover.

The protein resides in the plastid. It is found in the chloroplast. The catalysed reaction is 2 (2R)-3-phosphoglycerate + 2 H(+) = D-ribulose 1,5-bisphosphate + CO2 + H2O. It carries out the reaction D-ribulose 1,5-bisphosphate + O2 = 2-phosphoglycolate + (2R)-3-phosphoglycerate + 2 H(+). RuBisCO catalyzes two reactions: the carboxylation of D-ribulose 1,5-bisphosphate, the primary event in carbon dioxide fixation, as well as the oxidative fragmentation of the pentose substrate in the photorespiration process. Both reactions occur simultaneously and in competition at the same active site. The chain is Ribulose bisphosphate carboxylase large chain (rbcL) from Alisma plantago-aquatica (Common water-plantain).